Consider the following 201-residue polypeptide: MLPLLKKLYLTFARSSRIIITLVIIDQLSKWWFIDNLRWKPDLMLKFTSFLNMVYTWNYGISFGLMREYYQYSNAIFLITNTIIVCYLYYLMIRSKTIGSFAGYSFVIGGAVGNLIDRFFRGAVFDFIHFHYQNYSFPVFNLADCFITIGVIILIEDYYSTKKVIEEKAKGNYDNAQIEAMAEKIRNTDKGGNDKIASLQN.

Helical transmembrane passes span 73–93 (SNAI…YLMI) and 97–117 (TIGS…NLID). Catalysis depends on residues Asp126 and Asp144. The helical transmembrane segment at 135–155 (YSFPVFNLADCFITIGVIILI) threads the bilayer.

It belongs to the peptidase A8 family.

It is found in the cell inner membrane. The catalysed reaction is Release of signal peptides from bacterial membrane prolipoproteins. Hydrolyzes -Xaa-Yaa-Zaa-|-(S,diacylglyceryl)Cys-, in which Xaa is hydrophobic (preferably Leu), and Yaa (Ala or Ser) and Zaa (Gly or Ala) have small, neutral side chains.. It participates in protein modification; lipoprotein biosynthesis (signal peptide cleavage). Its function is as follows. This protein specifically catalyzes the removal of signal peptides from prolipoproteins. This Rickettsia africae (strain ESF-5) protein is Lipoprotein signal peptidase.